The primary structure comprises 2172 residues: Non-reducing polyketide synthase dpfgA (2172 aa).

The tract at residues Glu-74–Asp-181 is N-terminal acylcarrier protein transacylase domain (SAT). The 395-residue stretch at Asp-389 to Gln-783 folds into the Ketosynthase family 3 (KS3) domain. Active-site for beta-ketoacyl synthase activity residues include Cys-529, His-665, and His-706. Residues Val-895–Gln-1197 form a malonyl-CoA:ACP transacylase (MAT) domain region. The active-site For acyl/malonyl transferase activity is the Ser-981. The N-terminal hotdog fold stretch occupies residues Pro-1270 to Cys-1403. The region spanning Pro-1270–Gln-1581 is the PKS/mFAS DH domain. Residues Gly-1277–Ile-1575 form a product template (PT) domain region. The interval Ser-1428–Gln-1581 is C-terminal hotdog fold. Disordered stretches follow at residues Asp-1608–Phe-1631 and Tyr-1650–Asp-1672. Residues Tyr-1650–Ser-1668 show a composition bias toward low complexity. Residues Ser-1671–Asp-1747 enclose the Carrier domain. Ser-1707 is modified (O-(pantetheine 4'-phosphoryl)serine). A disordered region spans residues Asp-1751–Gln-1773. The methyltransferase (CMeT) domain stretch occupies residues Glu-1975–Thr-2155.

It participates in secondary metabolite biosynthesis; terpenoid biosynthesis. Its function is as follows. Non-reducing polyketide synthase; part of the gene cluster that mediates the biosynthesis of diterpenoid pyrones. The first step of the pathway is the synthesis of the alpha-pyrone moiety by the polyketide synthase dpfgA via condensation of one acetyl-CoA starter unit with 3 malonyl-CoA units and 2 methylations. The alpha-pyrone is then combined with geranylgeranyl pyrophosphate (GGPP) formed by the GGPP synthase dpfgD through the action of the prenyltransferase dpfgC to yield a linear alpha-pyrone diterpenoid. Subsequent steps in the diterpenoid pyrone biosynthetic pathway involve the decalin core formation, which is initiated by the epoxidation of the C10-C11 olefin by the FAD-dependent oxidoreductase dpfgE, and is followed by a cyclization cascade catalyzed by the terpene cyclase dpfgB. The short chain dehydrogenase/reductase dpfgG then oxidizes the 8S hydroxy group to a ketone and the short chain dehydrogenase/reductase dpfgH reduces the ketone to the 8R hydroxy group to yield higginsianin B. Higginsianin B is further methylated by the methyltransferase dpfgI to produce the intermediate named FDDP B. The cytochrome P450 monooxygenase dfgpJ then catalyzes a three-step oxidation at C-27 to generate a carboxylic acid as well as C-26 hydroxylation. Finally, methyltransferase dpfgK methylates the carboxylic acid generated by dpfgJ, yielding the final diterpenoid pyrones from the pathway which were named FDDP D and FDDP E. The polypeptide is Non-reducing polyketide synthase dpfgA (Gibberella zeae (strain ATCC MYA-4620 / CBS 123657 / FGSC 9075 / NRRL 31084 / PH-1) (Wheat head blight fungus)).